Reading from the N-terminus, the 232-residue chain is Ribose-5-phosphate isomerase A (232 aa).

Residues 28–31, 83–86, and 96–99 contribute to the substrate site; these read TGST, DGAD, and KGGG. The active-site Proton acceptor is Glu-105. Lys-123 provides a ligand contact to substrate.

This sequence belongs to the ribose 5-phosphate isomerase family. Homodimer.

The catalysed reaction is aldehydo-D-ribose 5-phosphate = D-ribulose 5-phosphate. Its pathway is carbohydrate degradation; pentose phosphate pathway; D-ribose 5-phosphate from D-ribulose 5-phosphate (non-oxidative stage): step 1/1. Catalyzes the reversible conversion of ribose-5-phosphate to ribulose 5-phosphate. This chain is Ribose-5-phosphate isomerase A, found in Rhodopseudomonas palustris (strain BisB18).